A 140-amino-acid polypeptide reads, in one-letter code: ATP synthase epsilon chain (140 aa).

Belongs to the ATPase epsilon chain family. As to quaternary structure, F-type ATPases have 2 components, CF(1) - the catalytic core - and CF(0) - the membrane proton channel. CF(1) has five subunits: alpha(3), beta(3), gamma(1), delta(1), epsilon(1). CF(0) has three main subunits: a, b and c.

Its subcellular location is the cell inner membrane. Functionally, produces ATP from ADP in the presence of a proton gradient across the membrane. The polypeptide is ATP synthase epsilon chain (Legionella pneumophila (strain Lens)).